A 909-amino-acid chain; its full sequence is MNMHSPNEPDAPEVMTTPQPGTAAVTPMMEQFIEIKAANPDSLLFYRMGDFYELFFDDAEKASRALGIVLTKRGKHQGHDIPMCGVPVHAADDYLQKLIGQGFRVAVCEQIEDPAEAKKRGSKSVVRRDVVRLVTPGTITEDKLLAPSESSFLMALGRVKGGSDHSFAIAWIDISTGAFRVAETTADRLLADIFRVDPRELIVAEPVFHDPELRPVFDVLGRVANPQPPSLFDSASATGRIARFFDVATPDSFGTFSRAELSAISGAIAYVEKTQKAERPPLSRPEREEQGSTLFIDPATRGNLELLRTLSGSREGSLFKAIDRTVTGGGARLLADRLMAPLTDPAAIGARLDSVSFFRTETRLCQAVRASLKSVADMPRALSRLALNRGGPRDLGALRAGFEAAGAIVEIFAATALPQELAEAMAAIRALPQALAQHLIQALGEELPLLKRDGGFLRGGYHPELDEMRALRDESRKVIAGLERSLIEETGIRSLKIRHNNVLGYYIEVTANHHAIMTGSDGAKARFIHRQTMANAMRFTTTELAELETKIANAADRALGIELAAFEALTAQAVGEAEKIRAGADALAAIDVSAALALLSESEAWCRPVVDSSLAFEISGGRHPVVEQALRRSGEGPFVANDCDLSPEGNAKNGAIWLLTGPNMGGKSTFLRQNALIAILAQTGSFVPATSAHIGVVDRLFSRVGASDDLARGRSTFMVEMVETAAILNQAGERALVILDEIGRGTATFDGLSIAWAAVEYLHEKNRCRAIFATHFHEMTSLAGKLARLHNVTMRVKEWEGDVVFLHEVGKGAADRSYGVQVARLAGLPEAVVDRAKQVLHQLEEGEVSGKTNRLVDDLPLFSVAMKREAPKPVKSDALGAALGDINPDEMTPREALEALYRLKGLAGK.

Basic and acidic residues predominate over residues 275 to 290; the sequence is QKAERPPLSRPEREEQ. The interval 275–295 is disordered; the sequence is QKAERPPLSRPEREEQGSTLF. ATP is bound at residue 661 to 668; sequence GPNMGGKS.

This sequence belongs to the DNA mismatch repair MutS family.

In terms of biological role, this protein is involved in the repair of mismatches in DNA. It is possible that it carries out the mismatch recognition step. This protein has a weak ATPase activity. This is DNA mismatch repair protein MutS from Mesorhizobium japonicum (strain LMG 29417 / CECT 9101 / MAFF 303099) (Mesorhizobium loti (strain MAFF 303099)).